A 181-amino-acid chain; its full sequence is Large ribosomal subunit protein bL19 (181 aa).

Positions Glu162–Lys173 are enriched in basic and acidic residues. Positions Glu162–Glu181 are disordered.

Belongs to the bacterial ribosomal protein bL19 family.

Functionally, this protein is located at the 30S-50S ribosomal subunit interface and may play a role in the structure and function of the aminoacyl-tRNA binding site. This Mesorhizobium japonicum (strain LMG 29417 / CECT 9101 / MAFF 303099) (Mesorhizobium loti (strain MAFF 303099)) protein is Large ribosomal subunit protein bL19.